The chain runs to 790 residues: Penicillin-binding protein 1A (790 aa).

Residues 1–6 (MYKSLL) lie on the Cytoplasmic side of the membrane. The chain crosses the membrane as a helical; Signal-anchor for type II membrane protein span at residues 7-27 (FCLKIFVFLILVGCGITAYII). Residues 28-790 (YHYSRDLPDY…SKEDQSQEIY (763 aa)) are Periplasmic-facing. A transglycosylase region spans residues 49–220 (TRIYSRDGKL…SELNPERNYA (172 aa)). Catalysis depends on glutamate 87, which acts as the Proton donor; for transglycosylase activity. Residues 398-711 (DVIVVEAIKE…SNVVLPIFID (314 aa)) are transpeptidase. Residue serine 457 is the Acyl-ester intermediate; for transpeptidase activity of the active site.

This sequence in the N-terminal section; belongs to the glycosyltransferase 51 family. The protein in the C-terminal section; belongs to the transpeptidase family.

The protein localises to the cell inner membrane. It catalyses the reaction [GlcNAc-(1-&gt;4)-Mur2Ac(oyl-L-Ala-gamma-D-Glu-L-Lys-D-Ala-D-Ala)](n)-di-trans,octa-cis-undecaprenyl diphosphate + beta-D-GlcNAc-(1-&gt;4)-Mur2Ac(oyl-L-Ala-gamma-D-Glu-L-Lys-D-Ala-D-Ala)-di-trans,octa-cis-undecaprenyl diphosphate = [GlcNAc-(1-&gt;4)-Mur2Ac(oyl-L-Ala-gamma-D-Glu-L-Lys-D-Ala-D-Ala)](n+1)-di-trans,octa-cis-undecaprenyl diphosphate + di-trans,octa-cis-undecaprenyl diphosphate + H(+). The catalysed reaction is Preferential cleavage: (Ac)2-L-Lys-D-Ala-|-D-Ala. Also transpeptidation of peptidyl-alanyl moieties that are N-acyl substituents of D-alanine.. It functions in the pathway cell wall biogenesis; peptidoglycan biosynthesis. Functionally, cell wall formation. Synthesis of cross-linked peptidoglycan from the lipid intermediates. The enzyme has a penicillin-insensitive transglycosylase N-terminal domain (formation of linear glycan strands) and a penicillin-sensitive transpeptidase C-terminal domain (cross-linking of the peptide subunits). This Rickettsia conorii (strain ATCC VR-613 / Malish 7) protein is Penicillin-binding protein 1A (mrcA).